The primary structure comprises 698 residues: Probable threonine--tRNA ligase 2, cytoplasmic (698 aa).

Positions 38-100 constitute a TGS domain; it reads GGGNIKLNDG…EMSGKDYNIE (63 aa). The disordered stretch occupies residues 541–560; that stretch reads NNNNNNNNNNEEINDNNNNN.

It belongs to the class-II aminoacyl-tRNA synthetase family.

It is found in the cytoplasm. The enzyme catalyses tRNA(Thr) + L-threonine + ATP = L-threonyl-tRNA(Thr) + AMP + diphosphate + H(+). The sequence is that of Probable threonine--tRNA ligase 2, cytoplasmic (thrS2) from Dictyostelium discoideum (Social amoeba).